Reading from the N-terminus, the 55-residue chain is MSNATTTNGKAPSQDVVAVIVGALAAMGYSADQIAHIRPIVSYNWKMEGRLRGNR.

The methylmalonyl-CoA decarboxylase is composed of five subunits: the carboxyltransferase alpha subunit (MmdA), the tunnel beta subunit (MmdB), the biotin-containing gamma subunit (MmdC), and the delta (MmdD) and epsilon (MmdE) subunits.

It is found in the cell membrane. It carries out the reaction (S)-methylmalonyl-CoA + Na(+)(in) + H(+)(out) = propanoyl-CoA + Na(+)(out) + CO2. With respect to regulation, completely inhibited by avidin. Its function is as follows. Subunit of the sodium ion pump methylmalonyl-CoA decarboxylase, which converts the chemical energy of a decarboxylation reaction into an electrochemical gradient of Na(+) ions across the cytoplasmic membrane, thereby creating a sodium ion motive force that is used for ATP synthesis. The epsilon subunit seems not important for the catalysis of either decarboxylation or Na(+) transport, but it improves binding of the alpha subunit and plays an important role in stabilizing the methylmalonyl-CoA-decarboxylase enzyme complex. Can also convert malonyl-CoA into acetyl-CoA. The polypeptide is Methylmalonyl-CoA decarboxylase subunit epsilon (Veillonella parvula (Staphylococcus parvulus)).